The sequence spans 352 residues: tRNA pseudouridine synthase D (352 aa).

D81 serves as the catalytic Nucleophile. In terms of domain architecture, TRUD spans 157–303; the sequence is GIPNYFGAQR…MEHERRILRL (147 aa).

This sequence belongs to the pseudouridine synthase TruD family.

It carries out the reaction uridine(13) in tRNA = pseudouridine(13) in tRNA. Its function is as follows. Responsible for synthesis of pseudouridine from uracil-13 in transfer RNAs. The protein is tRNA pseudouridine synthase D of Pseudomonas syringae pv. syringae (strain B728a).